A 151-amino-acid polypeptide reads, in one-letter code: GTP-dependent dephospho-CoA kinase (151 aa).

GTP-binding residues include Asp30, Val31, Asp49, Lys51, and Glu104.

Belongs to the GTP-dependent DPCK family.

The enzyme catalyses 3'-dephospho-CoA + GTP = GDP + CoA + H(+). It participates in cofactor biosynthesis; coenzyme A biosynthesis. Its function is as follows. Catalyzes the GTP-dependent phosphorylation of the 3'-hydroxyl group of dephosphocoenzyme A to form coenzyme A (CoA). This is GTP-dependent dephospho-CoA kinase from Cenarchaeum symbiosum (strain A).